We begin with the raw amino-acid sequence, 293 residues long: Bifunctional protein FolD (293 aa).

Residues 164-166 (GRS), S193, and T234 contribute to the NADP(+) site.

It belongs to the tetrahydrofolate dehydrogenase/cyclohydrolase family. As to quaternary structure, homodimer.

The catalysed reaction is (6R)-5,10-methylene-5,6,7,8-tetrahydrofolate + NADP(+) = (6R)-5,10-methenyltetrahydrofolate + NADPH. It carries out the reaction (6R)-5,10-methenyltetrahydrofolate + H2O = (6R)-10-formyltetrahydrofolate + H(+). It functions in the pathway one-carbon metabolism; tetrahydrofolate interconversion. Functionally, catalyzes the oxidation of 5,10-methylenetetrahydrofolate to 5,10-methenyltetrahydrofolate and then the hydrolysis of 5,10-methenyltetrahydrofolate to 10-formyltetrahydrofolate. The sequence is that of Bifunctional protein FolD from Azobacteroides pseudotrichonymphae genomovar. CFP2.